The chain runs to 1196 residues: Tubulin-specific chaperone D (1196 aa).

HEAT repeat units follow at residues 363–401, 599–634, 752–788, and 1106–1142; these read VIEQ…ADDV, YIAM…TYAL, SSIA…PGFL, and GDVR…VLTY.

It belongs to the TBCD family. Found in a complex with at least ARL2, PPP2CB, PPP2R1A, PPP2R2A, PPP2R5E and TBCD. Interacts with PPP2CB. Part of a supercomplex made of cofactors A to E. Cofactors A and D function by capturing and stabilizing tubulin in a quasi-native conformation. Cofactor E binds to the cofactor D-tubulin complex; interaction with cofactor C then causes the release of tubulin polypeptides that are committed to the native state. Interacts with ARL2; interaction is enhanced with the GDP-bound form of ARL2. Does not interact with ARL3, ARL4A and ARL4D. Interacts with beta tubulin. Interacts with TBCE.

Its subcellular location is the cell junction. It is found in the tight junction. The protein localises to the lateral cell membrane. It localises to the cytoplasm. The protein resides in the adherens junction. Its subcellular location is the cytoskeleton. It is found in the microtubule organizing center. The protein localises to the centrosome. Functionally, tubulin-folding protein implicated in the first step of the tubulin folding pathway and required for tubulin complex assembly. Involved in the regulation of microtubule polymerization or depolymerization, it modulates microtubule dynamics by capturing GTP-bound beta-tubulin (TUBB). Its ability to interact with beta tubulin is regulated via its interaction with ARL2. Acts as a GTPase-activating protein (GAP) for ARL2. Induces microtubule disruption in absence of ARL2. Increases degradation of beta tubulin, when overexpressed in polarized cells. Promotes epithelial cell detachment, a process antagonized by ARL2. Induces tight adherens and tight junctions disassembly at the lateral cell membrane. Required for correct assembly and maintenance of the mitotic spindle, and proper progression of mitosis. Involved in neuron morphogenesis. This is Tubulin-specific chaperone D (Tbcd) from Mus musculus (Mouse).